Consider the following 173-residue polypeptide: RNA pyrophosphohydrolase (173 aa).

Residues 13 to 166 (PYRPCVGLMI…KRKVYEEVVA (154 aa)) form the Nudix hydrolase domain. The Nudix box signature appears at 54-75 (GGIDKGEEPLQAAERELYEETG).

It belongs to the Nudix hydrolase family. RppH subfamily. A divalent metal cation is required as a cofactor.

Accelerates the degradation of transcripts by removing pyrophosphate from the 5'-end of triphosphorylated RNA, leading to a more labile monophosphorylated state that can stimulate subsequent ribonuclease cleavage. This chain is RNA pyrophosphohydrolase, found in Mesorhizobium japonicum (strain LMG 29417 / CECT 9101 / MAFF 303099) (Mesorhizobium loti (strain MAFF 303099)).